Consider the following 113-residue polypeptide: Gigasin-5 (113 aa).

In terms of tissue distribution, component of the organic matrix of calcified shell layers.

The chain is Gigasin-5 from Magallana gigas (Pacific oyster).